Reading from the N-terminus, the 228-residue chain is PKHD-type hydroxylase Rmet_3078 (228 aa).

Residues 80–180 (IVYPPMFNRY…RVGCFFWIQS (101 aa)) enclose the Fe2OG dioxygenase domain. Fe cation is bound by residues histidine 98, aspartate 100, and histidine 161. Arginine 171 provides a ligand contact to 2-oxoglutarate.

It depends on Fe(2+) as a cofactor. L-ascorbate serves as cofactor.

The polypeptide is PKHD-type hydroxylase Rmet_3078 (Cupriavidus metallidurans (strain ATCC 43123 / DSM 2839 / NBRC 102507 / CH34) (Ralstonia metallidurans)).